The following is an 85-amino-acid chain: Small ribosomal subunit protein bS16 (85 aa).

The protein belongs to the bacterial ribosomal protein bS16 family.

This Rubrobacter xylanophilus (strain DSM 9941 / JCM 11954 / NBRC 16129 / PRD-1) protein is Small ribosomal subunit protein bS16.